Reading from the N-terminus, the 209-residue chain is Uracil phosphoribosyltransferase (209 aa).

5-phospho-alpha-D-ribose 1-diphosphate contacts are provided by residues R77, R102, and 129-137 (DPMLATGVS). Uracil contacts are provided by residues I192 and 197–199 (GDA). Residue D198 coordinates 5-phospho-alpha-D-ribose 1-diphosphate.

Belongs to the UPRTase family. The cofactor is Mg(2+).

The catalysed reaction is UMP + diphosphate = 5-phospho-alpha-D-ribose 1-diphosphate + uracil. The protein operates within pyrimidine metabolism; UMP biosynthesis via salvage pathway; UMP from uracil: step 1/1. Its activity is regulated as follows. Allosterically activated by GTP. Its function is as follows. Catalyzes the conversion of uracil and 5-phospho-alpha-D-ribose 1-diphosphate (PRPP) to UMP and diphosphate. The sequence is that of Uracil phosphoribosyltransferase from Metamycoplasma arthritidis (strain 158L3-1) (Mycoplasma arthritidis).